Here is a 337-residue protein sequence, read N- to C-terminus: Fructose-1,6-bisphosphatase class 1 (337 aa).

Glutamate 89, aspartate 112, leucine 114, and aspartate 115 together coordinate Mg(2+). Residues 115–118 (DGSS), asparagine 208, tyrosine 241, and lysine 271 contribute to the substrate site. Glutamate 277 serves as a coordination point for Mg(2+).

Belongs to the FBPase class 1 family. In terms of assembly, homotetramer. Mg(2+) serves as cofactor.

Its subcellular location is the cytoplasm. It catalyses the reaction beta-D-fructose 1,6-bisphosphate + H2O = beta-D-fructose 6-phosphate + phosphate. Its pathway is carbohydrate biosynthesis; gluconeogenesis. In Psychromonas ingrahamii (strain DSM 17664 / CCUG 51855 / 37), this protein is Fructose-1,6-bisphosphatase class 1.